The sequence spans 1339 residues: MERVWPECTTRCRSLQHALDVISVVTRASEQHIKVFLSSYCCNAVTLKDDFGRNATHIAASCGKKNVLDWLITGKGVDLAVKDKESGWTALHRSIFYGHIDCALSLLKHGSNLYIQDKDGYTPLDLVMKDRPPHIVFKTSDPTELYTWGDNVNFTLGHGTQQSKHHPELVEMFPRSGVYIKQMVLCKFHSVFLSQKGQVYTCGHGQGGRLGHGDELTCLVPRLVEGLRGHPCTQVAGAKDHTVVLTEDGYVYTFGLNTFHQLGIQPPPPNSNVPRQIQAKTMKGKTVLGVAAGRFHTVLWTKDAVYTVGLNGGQLGYLQDPNGEKFVSCPRQVSALHHKDINITLVSASDGATVCVSERGDIYLLSEYQCKKLASKQLNLKKVLVSGGILEHKAAPEHLKENGGQPASVFALDQAGRVFCWKSPGSSLKQCWWVYGRQLFMSDVALNKNEIMFVTQDGEGFTGKWMLEKKKKENTISNIMCHSDSQNVYEKISMQKLPFVHRAVSVATDPSGCNFAVLQSDPKTSLFEVPSVSSSVFAEDFEKLLNEANETDSIHDVTFQVGTKIFPAHKYILALRCDFFSKLFSSGEINSLDFPEVHQKGEDAAGCDLFVIEKIPPELFSHVLQFIYSDTCDMLLQGHKPKLWHKEENENTIICNFQKMGFREDIEGKSAYEVYKNSRICAENEKQKGKTKQSKKTRSIGDETSPVKMLQNTAKKFGLSNLSSRLDGVRYENGRINVFHKKSENKLRFNQKKCSSHYDVMMKSEDGKEFHCHKCVLCARLEYFNSMLSSSWIEASCCSQLEMPIHSDVLQVILDYIYTDEVLTVKESANVEFVCNVLVIADQLLIVRLKEICEVTIAERITLKNAAELLEFAALYNADQLKLSCLQFVGLNMGALLEARSLDVLSDDVLKDLSEAYRKMIPSMNKRIITPYLDGPDISILQSEDIESLISVQDDIYSYQITQEATLKKSKAKPKKKQRKRLDSSGGYNLSDIIQSPTSTGFVKPEKTNSVESLQDLLTSDSEGSFVGASSPRDLQSPDLFPVFTHETKETICVERNRSSPPVANGAASTKMPIPTTSSPKAIPMSRITPSTSPNWVAMPCSPASPVTMDLRAIMELEENIQKCGAMPKLNAGGTKPGTHVMKLSQKQRKMMAMSSKESNNENKPAKVTVAPTTIKSPAKTWAAAFHLGENKSFRDLLLEEKQSVTSFPSLSSDVKKSKHTEELDPSELARRPSGTLNQEAKLKCDVPNQDNSNPWHLTLSKNNASSAPVTFTAIVEEEEKQEAALIRSREKPLALIQIEERAIQDLLLHYQAIDNPEEYITIERAAQIPMATPMWNKH.

ANK repeat units follow at residues 51 to 81, 86 to 115, and 119 to 154; these read FGRN…DLAV, SGWT…NLYI, and DGYT…NVNF. RCC1 repeat units follow at residues 142–195, 196–247, and 249–302; these read PTEL…FLSQ, KGQV…VLTE, and GYVY…LWTK. Positions 555-636 constitute a BTB 1 domain; the sequence is HDVTFQVGTK…IYSDTCDMLL (82 aa). Residues 685–704 are disordered; the sequence is EKQKGKTKQSKKTRSIGDET. Residues 689–698 are compositionally biased toward basic residues; the sequence is GKTKQSKKTR. A BTB 2 domain is found at 758–826; it reads YDVMMKSEDG…IYTDEVLTVK (69 aa). Positions 970-980 are enriched in basic residues; the sequence is SKAKPKKKQRK. 3 disordered regions span residues 970–993, 1058–1089, and 1208–1237; these read SKAK…LSDI, RSSP…SRIT, and FPSL…SGTL. The span at 1214-1231 shows a compositional bias: basic and acidic residues; it reads DVKKSKHTEELDPSELAR.

The protein localises to the cytoplasm. It localises to the membrane. In terms of biological role, acts as an inhibitor of BTK tyrosine kinase activity, thereby playing a role in B-cell development. This chain is Inhibitor of Bruton tyrosine kinase (ibtk), found in Xenopus laevis (African clawed frog).